Reading from the N-terminus, the 575-residue chain is 4-substituted benzoates-glutamate ligase GH3.12 (575 aa).

Residues 6–33 (DINETFEKQLKDLTSNVKSIQDNLLEEI) adopt a coiled-coil conformation. 95-96 (SS) contacts AMP. A salicylate-binding site is contributed by 120–123 (YDLR). Residues Thr301, Thr324, Ser328, Tyr347, Asp398, and Arg417 each contribute to the AMP site.

It belongs to the IAA-amido conjugating enzyme family. In terms of assembly, interacts with the P.syringae pv. maculicola effector HopW1-1 (via C-terminus). As to expression, expressed in seedlings, mostly in cotyledons, leaves, hypocotyls and sporadically in roots. Not detected in unchallenged adult plants, except in flowers.

Specifically and reversibly inhibited by salicylic acid (SA). Its function is as follows. Catalyzes the conjugation of specific amino acids (e.g. Glu and possibly His, Lys, and Met) to their preferred acyl substrates (e.g. 4-substituted benzoates), in a magnesium ion- and ATP-dependent manner. Can use 4-substituted benzoates such as 4-aminobenzoate (pABA), 4-fluorobenzoate and 4-hydroxybenzoate (4-HBA), and, to a lesser extent, benzoate, vanillate and trans-cinnamate, but not 2-substituted benzoates and salicylic acid (SA), as conjugating acyl substrates. Involved in both basal and induced resistance in a SA-dependent manner. Confers resistance to virulent and avirulent pathogens (at least bacteria and oomycetes), and promotes SA glucosides accumulation. Required for the establishment of hyper-sensitive response (HR) upon incompatible interaction and subsequent systemic acquired resistance (SAR). The sequence is that of 4-substituted benzoates-glutamate ligase GH3.12 (GH3.12) from Arabidopsis thaliana (Mouse-ear cress).